Reading from the N-terminus, the 231-residue chain is 6-phosphogluconolactonase (231 aa).

This sequence belongs to the glucosamine/galactosamine-6-phosphate isomerase family. 6-phosphogluconolactonase subfamily.

It catalyses the reaction 6-phospho-D-glucono-1,5-lactone + H2O = 6-phospho-D-gluconate + H(+). It functions in the pathway carbohydrate degradation; pentose phosphate pathway; D-ribulose 5-phosphate from D-glucose 6-phosphate (oxidative stage): step 2/3. In terms of biological role, hydrolysis of 6-phosphogluconolactone to 6-phosphogluconate. The polypeptide is 6-phosphogluconolactonase (pgl) (Neisseria meningitidis serogroup A / serotype 4A (strain DSM 15465 / Z2491)).